Consider the following 102-residue polypeptide: uncharacterized protein (102 aa).

Helical transmembrane passes span Phe-38–Leu-58 and Val-64–Phe-84.

Its subcellular location is the membrane. This is an uncharacterized protein from Saccharomyces cerevisiae (strain ATCC 204508 / S288c) (Baker's yeast).